Reading from the N-terminus, the 340-residue chain is Ferredoxin--NADP reductase (340 aa).

Residues Asp33, Gln41, Tyr46, Ala86, Phe120, Asp286, and Thr327 each contribute to the FAD site.

Belongs to the ferredoxin--NADP reductase type 2 family. Homodimer. FAD serves as cofactor.

The enzyme catalyses 2 reduced [2Fe-2S]-[ferredoxin] + NADP(+) + H(+) = 2 oxidized [2Fe-2S]-[ferredoxin] + NADPH. The sequence is that of Ferredoxin--NADP reductase from Rickettsia rickettsii (strain Iowa).